A 579-amino-acid polypeptide reads, in one-letter code: V-type ATP synthase alpha chain (579 aa).

227–234 (GGFGTGKT) serves as a coordination point for ATP.

It belongs to the ATPase alpha/beta chains family.

The enzyme catalyses ATP + H2O + 4 H(+)(in) = ADP + phosphate + 5 H(+)(out). Functionally, produces ATP from ADP in the presence of a proton gradient across the membrane. The V-type alpha chain is a catalytic subunit. The sequence is that of V-type ATP synthase alpha chain from Anaeromyxobacter dehalogenans (strain 2CP-C).